The chain runs to 123 residues: MNYLVAMEAAWLVRDVDDIDDAIGVAVSEAGKRLNEAEMDYVEVEVGATGCPACGEPFDSAFIAADTALVGLVLEMDVFNAESPEHAQRIAKSEIGGALRDVPLKVVEVFETEADEDEAEAEA.

It belongs to the UPF0212 family.

This is UPF0212 protein rrnAC0441 from Haloarcula marismortui (strain ATCC 43049 / DSM 3752 / JCM 8966 / VKM B-1809) (Halobacterium marismortui).